Reading from the N-terminus, the 249-residue chain is Type III pantothenate kinase (249 aa).

An ATP-binding site is contributed by 6–13; the sequence is DCGNSFIK. Residues Tyr93 and 100 to 103 contribute to the substrate site; that span reads GMDR. The active-site Proton acceptor is the Asp102. Asp122 is a K(+) binding site. Position 125 (Thr125) interacts with ATP. Thr181 lines the substrate pocket.

This sequence belongs to the type III pantothenate kinase family. Homodimer. NH4(+) is required as a cofactor. The cofactor is K(+).

It is found in the cytoplasm. The catalysed reaction is (R)-pantothenate + ATP = (R)-4'-phosphopantothenate + ADP + H(+). Its pathway is cofactor biosynthesis; coenzyme A biosynthesis; CoA from (R)-pantothenate: step 1/5. In terms of biological role, catalyzes the phosphorylation of pantothenate (Pan), the first step in CoA biosynthesis. This Pseudomonas putida (strain ATCC 47054 / DSM 6125 / CFBP 8728 / NCIMB 11950 / KT2440) protein is Type III pantothenate kinase.